The chain runs to 428 residues: Putative heme-binding peroxidase (428 aa).

The segment at 1-33 (MTAIQKPVVAKREAPKAEVNPTVSRSTQTETIK) is disordered. Residues 21–32 (PTVSRSTQTETI) are compositionally biased toward polar residues. Histidine 188 (proton acceptor) is an active-site residue. Residue histidine 312 participates in heme b binding. The Tryptophan radical intermediate role is filled by tryptophan 328.

Belongs to the peroxidase family. Cytochrome c peroxidase subfamily. Heme b is required as a cofactor.

In terms of biological role, destroys radicals which are normally produced within the cells and which are toxic to biological systems. This chain is Putative heme-binding peroxidase, found in Debaryomyces hansenii (strain ATCC 36239 / CBS 767 / BCRC 21394 / JCM 1990 / NBRC 0083 / IGC 2968) (Yeast).